A 217-amino-acid polypeptide reads, in one-letter code: ATP-dependent Clp protease proteolytic subunit 2 (217 aa).

Residue Ser113 is the Nucleophile of the active site. His138 is an active-site residue.

It belongs to the peptidase S14 family. As to quaternary structure, fourteen ClpP subunits assemble into 2 heptameric rings which stack back to back to give a disk-like structure with a central cavity, resembling the structure of eukaryotic proteasomes.

Its subcellular location is the cytoplasm. The enzyme catalyses Hydrolysis of proteins to small peptides in the presence of ATP and magnesium. alpha-casein is the usual test substrate. In the absence of ATP, only oligopeptides shorter than five residues are hydrolyzed (such as succinyl-Leu-Tyr-|-NHMec, and Leu-Tyr-Leu-|-Tyr-Trp, in which cleavage of the -Tyr-|-Leu- and -Tyr-|-Trp bonds also occurs).. Functionally, cleaves peptides in various proteins in a process that requires ATP hydrolysis. Has a chymotrypsin-like activity. Plays a major role in the degradation of misfolded proteins. This chain is ATP-dependent Clp protease proteolytic subunit 2, found in Frankia casuarinae (strain DSM 45818 / CECT 9043 / HFP020203 / CcI3).